We begin with the raw amino-acid sequence, 75 residues long: Conotoxin Im23.5 (75 aa).

The first 23 residues, 1–23 (MKFFTCLLLLLVVLTVVFDNVDA), serve as a signal peptide directing secretion. Cystine bridges form between C24/C28, C37/C40, and C41/C43. The propeptide occupies 24 to 50 (CDRSCTGVMGHPSCATCCACFTSAGKR).

Expressed by the venom duct.

The protein resides in the secreted. Probable neurotoxin. The sequence is that of Conotoxin Im23.5 from Conus imperialis (Imperial cone).